Consider the following 1585-residue polypeptide: Maestro heat-like repeat-containing protein family member 2B (1585 aa).

HEAT repeat units follow at residues 28–65, 228–263, 272–309, 310–346, 405–445, 531–569, 572–611, 662–699, 777–819, 964–1001, 1021–1059, 1112–1151, 1157–1195, 1258–1295, and 1363–1402; these read VNKEDIYSHLTSVIQNTDILDDAIVQRLIYYASKDMRD, GYALGQVPWLLNQYKDKEIDFHVTQSLKQILTAAVL, LRRSIFINLLQQICRAPEPPVKENEMKASSCFLILAHS, NPGELMEFFDEQVRSNNEAIRVGILTLLRLAVNADEP, TLNR…LVIG, IGLLKILPEIIHPKLVDLWKTRLPELLQPLEGKNISTVL, TMLLQLLKESLWKISDVAWTIQLTQDFKQQMGSYSNNSTE, ENHLDIVLKVLKTFQNQEKFFMNRCKSLFSGKKSLTKT, SYKE…LKPQ, HLEVERLQGLQEGLESDDVQVQIKISSKIAKIVSKFIP, PTCTKACGIWMITVLKQQGAALEDQLLEILGTIYHHMPV, ASSGKLLQALIDKLETELEDDIARVEAISVACAMYEVISM, GLYPELFTLLLKLVSCTLGQKMLTCPWSHRRHVMQQGEQ, GVILDIMEQLLSSLTSSSENYRITGAAFFSELMKEPIL, and CESLKALKKILELLTDRDVSFYFKEIVLQTRTFFEDEQDD.

In terms of assembly, found in a complex at least composed of MROH2B, PRKACA isoform 2 and TCP11. Interacts with PRKACA. Interacts with TCP11. In terms of processing, constitutively phosphorylated on serine and threonine residues in acrosomal region of the sperm head, midpiece and flagellar regions of noncapacitated spermatozoa. Phosphorylation on tyrosine residues increases upon sperm capacitation within the acrosomal and tail regions in a protein kinase A (PKA)-dependent signaling pathway.

Its subcellular location is the cytoplasm. The protein resides in the cytoplasmic vesicle. It is found in the secretory vesicle. It localises to the acrosome. The protein localises to the cell projection. Its subcellular location is the cilium. The protein resides in the flagellum. May play a role in the process of sperm capacitation. The protein is Maestro heat-like repeat-containing protein family member 2B of Homo sapiens (Human).